The primary structure comprises 641 residues: Probable serine protease FE772_23065 (641 aa).

The chain crosses the membrane as a helical span at residues 532–552 (WVELIAILAAAGWIRVMLIGL).

The protein belongs to the peptidase S1 family.

Its subcellular location is the cell inner membrane. Functionally, possibly a dedicated protease for substrate gasdermin bGSDM; cleaves the bGSDM precursor, releasing the pore-forming moiety, which integrates into the membrane and triggers cell death. Involved in defense against bacteriophages. When this probable 4 gene operon (bGSDM-FE772_23060-FE772_23065-FE772_23070) is inserted into E.coli it provides nearly 100-fold protection against phages T5 and T6 and about 8-fold against phage T4. The operon without bGSDM no longer protects against phage. This is Probable serine protease FE772_23065 from Lysobacter enzymogenes.